The primary structure comprises 269 residues: MNDLKLDKVSKVLKEVRKSVPLVHCITNYVTINDCANILLSYGASPAMCEAYDEVFDFVKISSALYINIGTFTREQESSAILAAVSAKTHNIPVVLDPVACAAIPKKIQFIDKLFKVGRVDVIKGNIGEIKFLAGETSNVKGVDSLEDGEGALECSRILSEKYNCVVAATGKKDFIVQGKNSAIIENGTEMLTNITGAGCMLGALCAAACGAFEDKFMAVVGAILSINIASEEAYKEAKAPGSFRVKLIDCIYELSEEKLKKEGKIAWN.

M48 lines the substrate pocket. Residues K124 and T170 each coordinate ATP. G197 is a substrate binding site.

This sequence belongs to the Thz kinase family. Mg(2+) serves as cofactor.

The catalysed reaction is 5-(2-hydroxyethyl)-4-methylthiazole + ATP = 4-methyl-5-(2-phosphooxyethyl)-thiazole + ADP + H(+). It functions in the pathway cofactor biosynthesis; thiamine diphosphate biosynthesis; 4-methyl-5-(2-phosphoethyl)-thiazole from 5-(2-hydroxyethyl)-4-methylthiazole: step 1/1. Functionally, catalyzes the phosphorylation of the hydroxyl group of 4-methyl-5-beta-hydroxyethylthiazole (THZ). The sequence is that of Hydroxyethylthiazole kinase from Clostridium kluyveri (strain NBRC 12016).